We begin with the raw amino-acid sequence, 799 residues long: High affinity nerve growth factor receptor (799 aa).

Positions 1-32 are cleaved as a signal peptide; it reads MLRGQRHGQLGWHRPAAGLGGLVTSLMLACAC. Residues 33-418 lie on the Extracellular side of the membrane; it reads AASCRETCCP…DPVEKKDETP (386 aa). 2 cysteine pairs are disulfide-bonded: cysteine 36–cysteine 41 and cysteine 40–cysteine 50. Asparagine 67 carries N-linked (GlcNAc...) asparagine glycosylation. 2 LRR repeats span residues 90-113 and 116-137; these read LGELRSLTIVKSGLRFVAPDAFHF and RLSHLNLSSNALESLSWKTVQG. N-linked (GlcNAc...) asparagine glycans are attached at residues asparagine 121, asparagine 190, asparagine 204, asparagine 255, asparagine 264, asparagine 320, asparagine 325, asparagine 341, asparagine 361, and asparagine 404. Positions 148–219 constitute an LRRCT domain; the sequence is NPLHCSCALL…GDDVFLQCQV (72 aa). The cysteines at positions 154 and 193 are disulfide-linked. Ig-like C2-type domains follow at residues 196-285 and 295-368; these read PSVK…VSVS and AVEQ…LAAN. Disulfide bonds link cysteine 217–cysteine 267 and cysteine 302–cysteine 348. Residues 419 to 442 form a helical membrane-spanning segment; the sequence is FGVSVAVGLAVSAALFLSALLLVL. At 443–799 the chain is on the cytoplasmic side; sequence NKCGQRSKFG…APPSYLDVLG (357 aa). Positions 472 to 493 are interaction with SQSTM1; that stretch reads MTLGGSSLSPTEGKGSGLQGHI. At tyrosine 499 the chain carries Phosphotyrosine; by autocatalysis. Positions 513-784 constitute a Protein kinase domain; it reads IILKWELGEG…LSMKDVHARL (272 aa). ATP-binding positions include 519–527 and lysine 547; that span reads LGEGAFGKV. The active-site Proton acceptor is the aspartate 653. 4 positions are modified to phosphotyrosine; by autocatalysis: tyrosine 679, tyrosine 683, tyrosine 684, and tyrosine 794.

The protein belongs to the protein kinase superfamily. Tyr protein kinase family. Insulin receptor subfamily. In terms of assembly, exists in a dynamic equilibrium between monomeric (low affinity) and dimeric (high affinity) structures. Homodimerization is induced by binding of a NGF dimer. Found in a complex, at least composed of KIDINS220, MAGI2, NTRK1 and RAPGEF2; the complex is mainly formed at late endosomes in a nerve growth factor (NGF)-dependent manner. Interacts with RAPGEF2; the interaction is strengthened after NGF stimulation. Interacts with SQSTM1; bridges NTRK1 to NGFR. Forms a ternary complex with NGFR and KIDINS220; this complex is affected by the expression levels of KIDINS220 and an increase in KIDINS220 expression leads to a decreased association of NGFR and NTRK1. Interacts (phosphorylated upon activation by NGF) with SHC1; mediates SHC1 phosphorylation and activation. Interacts (phosphorylated upon activation by NGF) with PLCG1; mediates PLCG1 phosphorylation and activation. Interacts (phosphorylated) with SH2B1 and SH2B2. Interacts with GRB2. Interacts with PIK3R1. Interacts with FRS2. Interacts with SORT1; may regulate NTRK1 anterograde axonal transport. Interacts with SH2D1A; regulates NTRK1. Interacts with NRADD. Interacts with RAB7A. Interacts with PTPRS. Interacts with USP36; USP36 does not deubiquitinate NTRK1. Interacts with GGA3. Interacts with TSPAN1; this interaction promotes NTRK1 stability. In terms of processing, ligand-mediated autophosphorylation. Interaction with SQSTM1 is phosphotyrosine-dependent. Autophosphorylation at Tyr-499 mediates interaction and phosphorylation of SHC1. N-glycosylated. Post-translationally, ubiquitinated. Undergoes polyubiquitination upon activation; regulated by NGFR. Ubiquitination by NEDD4L leads to degradation. Ubiquitination regulates the internalization of the receptor. As to expression, isoform Trka-II is primarily expressed in neuronal cells; isoform Trka-I is found in non-neuronal tissues.

The protein localises to the cell membrane. Its subcellular location is the early endosome membrane. It is found in the late endosome membrane. The protein resides in the recycling endosome membrane. The enzyme catalyses L-tyrosyl-[protein] + ATP = O-phospho-L-tyrosyl-[protein] + ADP + H(+). With respect to regulation, the pro-survival signaling effect of NTRK1 in neurons requires its endocytosis into signaling early endosomes and its retrograde axonal transport. This is regulated by different proteins including CFL1, RAC1 and SORT1. NTF3 is unable to induce this signaling probably due to the lability of the NTF3-NTRK1 complex in endosomes. SH2D1A inhibits the autophosphorylation of the receptor, and alters the recruitment and activation of downstream effectors and signaling cascades. Regulated by NGFR. In terms of biological role, receptor tyrosine kinase involved in the development and the maturation of the central and peripheral nervous systems through regulation of proliferation, differentiation and survival of sympathetic and nervous neurons. High affinity receptor for NGF which is its primary ligand. Can also bind and be activated by NTF3/neurotrophin-3. However, NTF3 only supports axonal extension through NTRK1 but has no effect on neuron survival. Upon dimeric NGF ligand-binding, undergoes homodimerization, autophosphorylation and activation. Recruits, phosphorylates and/or activates several downstream effectors including SHC1, FRS2, SH2B1, SH2B2 and PLCG1 that regulate distinct overlapping signaling cascades driving cell survival and differentiation. Through SHC1 and FRS2 activates a GRB2-Ras-MAPK cascade that regulates cell differentiation and survival. Through PLCG1 controls NF-Kappa-B activation and the transcription of genes involved in cell survival. Through SHC1 and SH2B1 controls a Ras-PI3 kinase-AKT1 signaling cascade that is also regulating survival. In absence of ligand and activation, may promote cell death, making the survival of neurons dependent on trophic factors. The sequence is that of High affinity nerve growth factor receptor (Ntrk1) from Rattus norvegicus (Rat).